The following is a 254-amino-acid chain: Phosphoribosylaminoimidazole-succinocarboxamide synthase (254 aa).

It belongs to the SAICAR synthetase family.

It carries out the reaction 5-amino-1-(5-phospho-D-ribosyl)imidazole-4-carboxylate + L-aspartate + ATP = (2S)-2-[5-amino-1-(5-phospho-beta-D-ribosyl)imidazole-4-carboxamido]succinate + ADP + phosphate + 2 H(+). The protein operates within purine metabolism; IMP biosynthesis via de novo pathway; 5-amino-1-(5-phospho-D-ribosyl)imidazole-4-carboxamide from 5-amino-1-(5-phospho-D-ribosyl)imidazole-4-carboxylate: step 1/2. The polypeptide is Phosphoribosylaminoimidazole-succinocarboxamide synthase (Gluconobacter oxydans (strain 621H) (Gluconobacter suboxydans)).